The chain runs to 253 residues: uncharacterized protein (253 aa).

The next 6 membrane-spanning stretches (helical) occupy residues 17 to 37 (MWLL…HIIA), 46 to 66 (IFGF…VFVF), 93 to 113 (LAAS…YGIW), 139 to 159 (MYGL…WTVF), 172 to 192 (AMVL…SPLV), and 222 to 242 (IHLS…LLIM).

It localises to the cell membrane. This is an uncharacterized protein from Bacillus subtilis (strain 168).